The chain runs to 231 residues: Somatolactin (231 aa).

The first 24 residues, 1–24 (MLMFTAIQRGVWVALLWPHLLTAS), serve as a signal peptide directing secretion. Disulfide bonds link Cys29–Cys39, Cys89–Cys205, and Cys222–Cys230. Residues Asn35 and Asn145 are each glycosylated (N-linked (GlcNAc...) asparagine).

This sequence belongs to the somatotropin/prolactin family. Pituitary gland.

The protein resides in the secreted. This is Somatolactin from Siganus guttatus (Orange-spotted spinefoot).